A 180-amino-acid polypeptide reads, in one-letter code: Inner membrane-spanning protein YciB (180 aa).

A run of 6 helical transmembrane segments spans residues 4–24, 25–45, 49–69, 76–96, 118–138, and 150–170; these read FLSE…GGGI, QHAT…CYVI, VSKL…ITLI, IKIK…MSGI, ITLS…NEVV, and FKVF…LPLL.

The protein belongs to the YciB family.

The protein localises to the cell inner membrane. In terms of biological role, plays a role in cell envelope biogenesis, maintenance of cell envelope integrity and membrane homeostasis. In Rickettsia rickettsii (strain Iowa), this protein is Inner membrane-spanning protein YciB.